The following is a 174-amino-acid chain: Crossover junction endodeoxyribonuclease RuvC (174 aa).

Catalysis depends on residues D8, E68, and D140. The Mg(2+) site is built by D8, E68, and D140.

It belongs to the RuvC family. In terms of assembly, homodimer which binds Holliday junction (HJ) DNA. The HJ becomes 2-fold symmetrical on binding to RuvC with unstacked arms; it has a different conformation from HJ DNA in complex with RuvA. In the full resolvosome a probable DNA-RuvA(4)-RuvB(12)-RuvC(2) complex forms which resolves the HJ. It depends on Mg(2+) as a cofactor.

Its subcellular location is the cytoplasm. It catalyses the reaction Endonucleolytic cleavage at a junction such as a reciprocal single-stranded crossover between two homologous DNA duplexes (Holliday junction).. The RuvA-RuvB-RuvC complex processes Holliday junction (HJ) DNA during genetic recombination and DNA repair. Endonuclease that resolves HJ intermediates. Cleaves cruciform DNA by making single-stranded nicks across the HJ at symmetrical positions within the homologous arms, yielding a 5'-phosphate and a 3'-hydroxyl group; requires a central core of homology in the junction. The consensus cleavage sequence is 5'-(A/T)TT(C/G)-3'. Cleavage occurs on the 3'-side of the TT dinucleotide at the point of strand exchange. HJ branch migration catalyzed by RuvA-RuvB allows RuvC to scan DNA until it finds its consensus sequence, where it cleaves and resolves the cruciform DNA. This is Crossover junction endodeoxyribonuclease RuvC from Legionella pneumophila (strain Paris).